A 561-amino-acid chain; its full sequence is Putative transport protein YbjL (561 aa).

5 helical membrane passes run 8-28 (LLNG…LCLG), 32-52 (LGSV…LLGQ), 66-86 (FMLF…SIFF), 94-114 (MLAL…GKLF), and 158-178 (NLSL…IVGA). RCK C-terminal domains are found at residues 200-288 (RGLD…SFRN) and 292-373 (VFDR…RIGF). Transmembrane regions (helical) follow at residues 383–403 (LLAF…TFQF), 406–426 (FSFG…LGFL), 447–467 (FGLM…ISNG), 475–495 (MLIA…LFGA), and 540–560 (AIAN…WPGL).

The protein belongs to the AAE transporter (TC 2.A.81) family. YbjL subfamily.

Its subcellular location is the cell membrane. In Salmonella typhi, this protein is Putative transport protein YbjL.